The primary structure comprises 184 residues: Photosystem I assembly protein Ycf4 (184 aa).

Helical transmembrane passes span 22 to 42 (FCWA…GTSS) and 57 to 77 (IIFF…LFIS).

Belongs to the Ycf4 family.

It localises to the plastid. It is found in the chloroplast thylakoid membrane. In terms of biological role, seems to be required for the assembly of the photosystem I complex. This is Photosystem I assembly protein Ycf4 from Lepidium virginicum (Virginia pepperweed).